A 262-amino-acid polypeptide reads, in one-letter code: Ornithine carbamoyltransferase (262 aa).

Carbamoyl phosphate contacts are provided by residues 3-7, Q30, R54, and 81-84; these read STRTR and HPTQ. Residues N114, D178, and 182-183 each bind L-ornithine; that span reads SM. Residues 219–222 and T247 each bind carbamoyl phosphate; that span reads HCLP.

Belongs to the aspartate/ornithine carbamoyltransferase superfamily. OTCase family.

Its subcellular location is the cytoplasm. It carries out the reaction carbamoyl phosphate + L-ornithine = L-citrulline + phosphate + H(+). It participates in amino-acid biosynthesis; L-arginine biosynthesis; L-arginine from L-ornithine and carbamoyl phosphate: step 1/3. Functionally, reversibly catalyzes the transfer of the carbamoyl group from carbamoyl phosphate (CP) to the N(epsilon) atom of ornithine (ORN) to produce L-citrulline. This Neisseria lactamica protein is Ornithine carbamoyltransferase (argF).